Consider the following 276-residue polypeptide: MNKKRLLPKASLGALFMLFGTALTACSNSDFQTNLTSLNQLREGVNQNTSLTQDKKAFVESLQKAFENNPEGTTKVLLDAWKFTLLDSKILESKDPSRFVKAFGSGKSNEDVEPNASVKGLRLDKRFEPSTANIINNVISLNEQKVEAFNIQYKSRTSFKVQVKLNAQGKYQKSQVQSYLQQIGLNDGDLKQESGTLSADLIFTYTVPESNLFSRKNFDTLMKKINFNTTLKIDMVGKDEIMKKILQSTTFTNNLSSQTFQDQSIDLLPYLLYSIL.

The N-terminal stretch at 1 to 25 (MNKKRLLPKASLGALFMLFGTALTA) is a signal peptide. The N-palmitoyl cysteine moiety is linked to residue cysteine 26. The S-diacylglycerol cysteine moiety is linked to residue cysteine 26.

The protein belongs to the MG439/MG440 family.

It localises to the cell membrane. This is an uncharacterized protein from Mycoplasma pneumoniae (strain ATCC 29342 / M129 / Subtype 1) (Mycoplasmoides pneumoniae).